Reading from the N-terminus, the 60-residue chain is Defensin-like protein 4 (60 aa).

Disulfide bonds link C4–C56, C17–C41, C26–C51, and C30–C53.

The protein belongs to the DEFL family. Protease inhibitor I18 (RTI/MTI-2) subfamily.

It is found in the secreted. Functionally, inhibits trypsin and chymotrypsin. In Brassica napus (Rape), this protein is Defensin-like protein 4.